The chain runs to 627 residues: Coiled-coil domain-containing protein 22 (627 aa).

The interval 1 to 321 (MEEADRILIH…VADIPAASQR (321 aa)) is sufficient for interaction with COMMD1. The interval 1-447 (MEEADRILIH…LQDCRELESS (447 aa)) is sufficicient and required for interaction with CCDC93. The stretch at 321–384 (RPEQDTRAAQ…SVAEQEQALR (64 aa)) forms a coiled coil. Residue Ser410 is modified to Phosphoserine. Residues 448 to 535 (RRLVEIQELH…NSLSGKLDRT (88 aa)) adopt a coiled-coil conformation.

The protein belongs to the CCDC22 family. Component of the commander complex consisting of the CCC subcomplex and the retriever subcomplex. Component of the CCC (COMMD/CCDC22/CCDC93) subcomplex consisting of COMMD1, COMMD2, COMMD3, COMMD4, COMMD5, COMMD6, COMMD7, COMMD8, COMMD9, COMMD10, CCDC22 and CCDC93. Forms a coiled-coil heterodimer with CCDC22; this heterodimer interacts with the guanine nucleotide exchange factor DENND10; the interaction is direct. Interacts with CUL1, CUL2, CUL3, SKP1, BTRC. Interacts with SNX17 and SNX31. Interacts with CPNE1 and CPNE4.

The protein localises to the endosome. It localises to the cytoplasm. It is found in the cytoskeleton. The protein resides in the microtubule organizing center. Its subcellular location is the centrosome. Its function is as follows. Component of the commander complex that is essential for endosomal recycling of transmembrane cargos; the Commander complex is composed of composed of the CCC subcomplex and the retriever subcomplex. Component of the CCC complex, which is involved in the regulation of endosomal recycling of surface proteins, including integrins, signaling receptor and channels. Involved in regulation of NF-kappa-B signaling. Promotes ubiquitination of I-kappa-B-kinase subunit IKBKB and its subsequent proteasomal degradation leading to NF-kappa-B activation; the function may involve association with COMMD8 and a CUL1-dependent E3 ubiquitin ligase complex. May down-regulate NF-kappa-B activity via association with COMMD1 and involving a CUL2-dependent E3 ubiquitin ligase complex. Regulates the cellular localization of COMM domain-containing proteins, such as COMMD1 and COMMD10. Component of the CCC complex, which is involved in the regulation of endosomal recycling of surface proteins, including integrins, signaling receptor and channels. The CCC complex associates with SNX17, retriever and WASH complexes to prevent lysosomal degradation and promote cell surface recycling of numerous cargos such as integrins ITGA5:ITGB1. Plays a role in copper ion homeostasis. Involved in copper-dependent ATP7A trafficking between the trans-Golgi network and vesicles in the cell periphery; the function is proposed to depend on its association within the CCC complex and cooperation with the WASH complex on early endosomes. The polypeptide is Coiled-coil domain-containing protein 22 (Rattus norvegicus (Rat)).